The primary structure comprises 392 residues: MIDCRYYQQNECRSCQWLEIPYSQQLTEKQYHLKQQLISINCDEAQWLAPFQSNEQGFRNKAKMVVSGSVERPILGILKNPNDPQNAIDLCDCPLYPTHFSAIFSILKDFIGRAGLVPYNIAKQKGELKYILLTESIATEKLMLRFVLRTENKLPLIRRELPKLLEKLPHLEVISINLQPQHAAILEGEQEIFLTEQQFLPENFNGIPLFIRPQGFFQTNPKVAAGLYASAQQWVAEFPIYNLWDLFCGVGGFGLHCAKALQEKWGKPIKLTGIEISSSAILAASHSAKILGLEHVNFQSLDAASVIENKNENKPDLVIVNPPRRGIGKELSEFLNQIQPHFILYSSCNAMTMGKDLQHLTCYKPLKIQLFDMFPQTSHYEVLVLLERKKIN.

C4, C12, C15, and C93 together coordinate [4Fe-4S] cluster. Residues Q218, F247, E275, and N321 each contribute to the S-adenosyl-L-methionine site. Residue C348 is the Nucleophile of the active site.

The protein belongs to the class I-like SAM-binding methyltransferase superfamily. RNA M5U methyltransferase family. RlmC subfamily.

The enzyme catalyses uridine(747) in 23S rRNA + S-adenosyl-L-methionine = 5-methyluridine(747) in 23S rRNA + S-adenosyl-L-homocysteine + H(+). Its function is as follows. Catalyzes the formation of 5-methyl-uridine at position 747 (m5U747) in 23S rRNA. The sequence is that of 23S rRNA (uracil(747)-C(5))-methyltransferase RlmC from Haemophilus influenzae (strain PittGG).